The following is an 82-amino-acid chain: Putative membrane protein insertion efficiency factor (82 aa).

Belongs to the UPF0161 family.

The protein resides in the cell inner membrane. Functionally, could be involved in insertion of integral membrane proteins into the membrane. This is Putative membrane protein insertion efficiency factor from Colwellia psychrerythraea (strain 34H / ATCC BAA-681) (Vibrio psychroerythus).